A 360-amino-acid chain; its full sequence is S-adenosylmethionine:tRNA ribosyltransferase-isomerase (360 aa).

Belongs to the QueA family. In terms of assembly, monomer.

It localises to the cytoplasm. It carries out the reaction 7-aminomethyl-7-carbaguanosine(34) in tRNA + S-adenosyl-L-methionine = epoxyqueuosine(34) in tRNA + adenine + L-methionine + 2 H(+). Its pathway is tRNA modification; tRNA-queuosine biosynthesis. Functionally, transfers and isomerizes the ribose moiety from AdoMet to the 7-aminomethyl group of 7-deazaguanine (preQ1-tRNA) to give epoxyqueuosine (oQ-tRNA). This is S-adenosylmethionine:tRNA ribosyltransferase-isomerase from Burkholderia mallei (strain NCTC 10247).